Consider the following 384-residue polypeptide: 8-amino-7-oxononanoate synthase (384 aa).

Arg-21 is a binding site for substrate. Gly-108–Phe-109 is a pyridoxal 5'-phosphate binding site. His-133 lines the substrate pocket. Residues Ser-179, His-207, and Thr-233 each coordinate pyridoxal 5'-phosphate. Lys-236 is modified (N6-(pyridoxal phosphate)lysine). Thr-352 serves as a coordination point for substrate.

It belongs to the class-II pyridoxal-phosphate-dependent aminotransferase family. BioF subfamily. In terms of assembly, homodimer. It depends on pyridoxal 5'-phosphate as a cofactor.

The catalysed reaction is 6-carboxyhexanoyl-[ACP] + L-alanine + H(+) = (8S)-8-amino-7-oxononanoate + holo-[ACP] + CO2. It participates in cofactor biosynthesis; biotin biosynthesis. In terms of biological role, catalyzes the decarboxylative condensation of pimeloyl-[acyl-carrier protein] and L-alanine to produce 8-amino-7-oxononanoate (AON), [acyl-carrier protein], and carbon dioxide. This Shigella dysenteriae serotype 1 (strain Sd197) protein is 8-amino-7-oxononanoate synthase.